The chain runs to 965 residues: UvrABC system protein A (965 aa).

An ATP-binding site is contributed by 32-39 (GLSGSGKS). A C4-type zinc finger spans residues 254–281 (CPVCDYSLPELEPRLFSFNAPMGACPAC). ABC transporter domains follow at residues 311–588 (WDRR…PRSL) and 608–937 (PNAT…HFLA). 641–648 (GVSGSGKS) serves as a coordination point for ATP. A C4-type zinc finger spans residues 740–766 (CEACEGDGLIKVEMHFLPDVYVPCDIC).

It belongs to the ABC transporter superfamily. UvrA family. As to quaternary structure, forms a heterotetramer with UvrB during the search for lesions.

It is found in the cytoplasm. Functionally, the UvrABC repair system catalyzes the recognition and processing of DNA lesions. UvrA is an ATPase and a DNA-binding protein. A damage recognition complex composed of 2 UvrA and 2 UvrB subunits scans DNA for abnormalities. When the presence of a lesion has been verified by UvrB, the UvrA molecules dissociate. This Xylella fastidiosa (strain Temecula1 / ATCC 700964) protein is UvrABC system protein A.